The following is a 362-amino-acid chain: Glutaminase-asparaginase (362 aa).

Residues 1–25 form the signal peptide; sequence MKSALKTFVPGALALLLLFPVAAQA. The 328-residue stretch at 35 to 362 folds into the Asparaginase/glutaminase domain; the sequence is ANVVILATGG…KELQRMFWEY (328 aa). The Acyl-ester intermediate role is filled by Thr45. Substrate contacts are provided by residues Ser92 and 125–126; that span reads TD.

This sequence belongs to the asparaginase 1 family. Homotetramer.

The protein resides in the periplasm. The catalysed reaction is L-glutamine + H2O = L-glutamate + NH4(+). It carries out the reaction L-asparagine + H2O = L-aspartate + NH4(+). This Pseudomonas fluorescens biotype A protein is Glutaminase-asparaginase.